We begin with the raw amino-acid sequence, 480 residues long: NADH-quinone oxidoreductase subunit N 1 (480 aa).

A run of 14 helical transmembrane segments spans residues 12–32, 38–58, 78–98, 106–126, 128–148, 163–183, 203–223, 241–261, 271–291, 303–323, 326–346, 372–392, 396–416, and 449–469; these read LSMP…IGVF, TPTV…WLVL, FMKV…VGHA, FEFP…ISAN, LISL…VAAI, FVLG…VYGF, LGLV…ISAV, TAFF…RIVI, WQQI…FAAI, SSIG…MAGV, VILY…CILA, ATVL…AGFF, FVFV…GVLA, and LVFG…GPLG.

Belongs to the complex I subunit 2 family. NDH-1 is composed of 14 different subunits. Subunits NuoA, H, J, K, L, M, N constitute the membrane sector of the complex.

It is found in the cell inner membrane. It catalyses the reaction a quinone + NADH + 5 H(+)(in) = a quinol + NAD(+) + 4 H(+)(out). In terms of biological role, NDH-1 shuttles electrons from NADH, via FMN and iron-sulfur (Fe-S) centers, to quinones in the respiratory chain. The immediate electron acceptor for the enzyme in this species is believed to be ubiquinone. Couples the redox reaction to proton translocation (for every two electrons transferred, four hydrogen ions are translocated across the cytoplasmic membrane), and thus conserves the redox energy in a proton gradient. The chain is NADH-quinone oxidoreductase subunit N 1 from Rhizobium meliloti (strain 1021) (Ensifer meliloti).